The chain runs to 415 residues: Sphingomyelin synthase-related protein 1 (415 aa).

The SAM domain maps to 12 to 78 (WTTKHVAVWL…MLSVRKLQKI (67 aa)). The next 4 membrane-spanning stretches (helical) occupy residues 153–173 (ILSC…MVIV), 201–221 (FAMT…VLLL), 232–252 (LCSL…VTSL), and 277–297 (FAIW…GDYM). Residue H301 is part of the active site. A helical transmembrane segment spans residues 322-342 (FLHTLSWVLNLFGIFFILAAH). Catalysis depends on residues H344 and D348. The chain crosses the membrane as a helical span at residues 347-367 (IDVFIAFYITTRLFLYYHTLA). Residues 368–415 (NTRAYQQSRRARIWFPMFSFFECNVNGTVPNEYCWPFSKPAIMKRLIG) lie on the Cytoplasmic side of the membrane.

This sequence belongs to the sphingomyelin synthase family.

Its subcellular location is the endoplasmic reticulum membrane. The catalysed reaction is an N-acylsphing-4-enine + a 1,2-diacyl-sn-glycero-3-phosphoethanolamine = an N-acylsphing-4-enine 1-phosphoethanolamine + a 1,2-diacyl-sn-glycerol. It carries out the reaction an N-acylsphinganine + a 1,2-diacyl-sn-glycero-3-phosphoethanolamine = an N-acylsphinganine-1-phosphoethanolamine + a 1,2-diacyl-sn-glycerol. The enzyme catalyses an N-acyl-(4R)-4-hydroxysphinganine + a 1,2-diacyl-sn-glycero-3-phosphoethanolamine = an N-acyl-(4R)-4-hydroxysphinganine-1-phosphoethanolamine + a 1,2-diacyl-sn-glycerol. It catalyses the reaction N-hexadecanoylsphinganine + a 1,2-diacyl-sn-glycero-3-phosphoethanolamine = N-hexadecanoyl-sphinganine-1-phosphoethanolamine + a 1,2-diacyl-sn-glycerol. The catalysed reaction is N-hexadecanoyl-(4R)-hydroxysphinganine + a 1,2-diacyl-sn-glycero-3-phosphoethanolamine = N-hexadecanoyl-(4R)-hydroxysphinganine-1-phosphoethanolamine + a 1,2-diacyl-sn-glycerol. Its pathway is sphingolipid metabolism. Synthesizes sphingolipids through transfer of a phosphatidyl head group from a glycerophospholipid on to the primary hydroxyl of a ceramide in the lumen of the endoplasmic reticulum. Catalyzes the synthesis of ceramide phosphoethanolamines (CPEs) (such as N-acylsphing-4-enine 1-phosphoethanolamine) by transferring phosphoethanolamine head group, which is smaller and more hydrophilic than the phosphocholine (PC) headgroup transferred in the canonical sphingomyelin synthesis (SMS) reaction by SMS1 or SMS2, from a phosphatidylethanolamine (1,2-diacyl-sn-glycero-3-phosphoethanolamine, PE) to a ceramide (such as N-acylsphing-4-enine). The larger PC prevents an efficient fit in the enzyme's catalytic pocket, leading to little or no SMS activity. In vitro, in the absence of ceramide, it has PLC activity with preference for phosphatidylinositol and phosphatidic acid, but also hydrolyzes phosphatidylethanolamine. This chain is Sphingomyelin synthase-related protein 1, found in Homo sapiens (Human).